The sequence spans 213 residues: Maleylacetoacetate isomerase (213 aa).

A GST N-terminal domain is found at 3 to 84 (NETVLYDYWR…YLAETRDGTG (82 aa)). One can recognise a GST C-terminal domain in the interval 89–213 (HPIDRQRVRA…QRAHPDRAKP (125 aa)).

The protein belongs to the GST superfamily. Zeta family.

The enzyme catalyses 4-maleylacetoacetate = 4-fumarylacetoacetate. The protein operates within amino-acid degradation; L-phenylalanine degradation; acetoacetate and fumarate from L-phenylalanine: step 5/6. The protein is Maleylacetoacetate isomerase (maiA) of Rhizobium meliloti (strain 1021) (Ensifer meliloti).